A 720-amino-acid polypeptide reads, in one-letter code: Exocyst complex component 7 (720 aa).

2 coiled-coil regions span residues 5–34 (EDAS…SLEK) and 63–83 (VHKQ…TLSN). Residue Ser-133 is modified to Phosphoserine. Residues 249–268 (SPAVQTKRKETPTKKAPKRP) form a disordered region.

This sequence belongs to the EXO70 family.

The protein localises to the cytoplasm. The protein resides in the cytosol. Its subcellular location is the cell membrane. It localises to the midbody. It is found in the midbody ring. Functionally, component of the exocyst complex involved in the docking of exocytic vesicles with fusion sites on the plasma membrane. It is required for neuron survival and plays an essential role in telencephalon development. This is Exocyst complex component 7 (exoc7) from Danio rerio (Zebrafish).